The primary structure comprises 125 residues: Cyclin-dependent protein kinase inhibitor SMR16 (125 aa).

Functionally, probable cyclin-dependent protein kinase (CDK) inhibitor that functions as a repressor of mitosis in the endoreduplication cell cycle. In Arabidopsis thaliana (Mouse-ear cress), this protein is Cyclin-dependent protein kinase inhibitor SMR16.